Here is a 251-residue protein sequence, read N- to C-terminus: Small ribosomal subunit protein uS3 (251 aa).

The region spanning I39–I109 is the KH type-2 domain. Basic and acidic residues predominate over residues L222–S239. Residues L222–T251 are disordered. The segment covering R240–T251 has biased composition (basic residues).

It belongs to the universal ribosomal protein uS3 family. In terms of assembly, part of the 30S ribosomal subunit. Forms a tight complex with proteins S10 and S14.

Its function is as follows. Binds the lower part of the 30S subunit head. Binds mRNA in the 70S ribosome, positioning it for translation. The chain is Small ribosomal subunit protein uS3 from Prosthecochloris aestuarii (strain DSM 271 / SK 413).